A 762-amino-acid polypeptide reads, in one-letter code: Endonuclease MutS2 (762 aa).

333–340 (GVNAGGKT) is an ATP binding site. The 75-residue stretch at 688 to 762 (LDLRGQRSEE…GGSGVKIVKL (75 aa)) folds into the Smr domain.

The protein belongs to the DNA mismatch repair MutS family. MutS2 subfamily. Homodimer. Binds to stalled ribosomes, contacting rRNA.

Its function is as follows. Endonuclease that is involved in the suppression of homologous recombination and thus may have a key role in the control of bacterial genetic diversity. Acts as a ribosome collision sensor, splitting the ribosome into its 2 subunits. Detects stalled/collided 70S ribosomes which it binds and splits by an ATP-hydrolysis driven conformational change. Acts upstream of the ribosome quality control system (RQC), a ribosome-associated complex that mediates the extraction of incompletely synthesized nascent chains from stalled ribosomes and their subsequent degradation. Probably generates substrates for RQC. The polypeptide is Endonuclease MutS2 (Helicobacter pylori (strain J99 / ATCC 700824) (Campylobacter pylori J99)).